A 299-amino-acid polypeptide reads, in one-letter code: MSKKLSVQEIILTLQKFWSDQGCMLMQSYDTEKGAGTMSPYTFLRAIGPEPWNAAYVEPSRRPADGRYGENPNRLYQHHQFQVVMKPSPENVQDLYLQSLEKLGINPLEHDIRFVEDNWENPSMGCAGVGWEVWLDGMEISQFTYFQQVGGLEVDPVTSEITYGLERLSSYIQDVNSVFDLEWGDGVKYGDIFLEPEFENSKYAFEDSNEELLLMLFDEYEKEAKRQIKNGLVHPAYDYCLKCSHTFNLMDARGMVSVTERAGYLDRIRNMAKSIAKEFVAQREKRGFPLLKHAQEETK.

It belongs to the class-II aminoacyl-tRNA synthetase family. As to quaternary structure, tetramer of two alpha and two beta subunits.

The protein resides in the cytoplasm. The catalysed reaction is tRNA(Gly) + glycine + ATP = glycyl-tRNA(Gly) + AMP + diphosphate. This chain is Glycine--tRNA ligase alpha subunit, found in Lactiplantibacillus plantarum (strain ATCC BAA-793 / NCIMB 8826 / WCFS1) (Lactobacillus plantarum).